Reading from the N-terminus, the 363-residue chain is MPPTPCSLCHTARALVKRPKTGQQVCKDCFFEVFETEVHNTIVEGEGIFKRGERVAIGASGGKDSTVLAHVLSVLNKRYDYGLDLYLLSIDEGITGYRDDSLETVKQNQAEYGLPLKILSYSELYGWTMDKIVEQVGKKNNCTFCGVFRRQALDRGAAQLGVDHIVTGHNADDIAETVLMNIMRGDIARLARCTAVTTQSEDTIKRSKPFKYAYEKEIVMYAYFKKLTYFSTECIYSPDAYRGHARVFLKDLEAVRPSAIVDIIHSGESFVLEQSVQRGMKALQTCLRCGYISSNDLCKACALLEGLESGLSRSALRQTQESTSAAPEGHRTIPMFERYASLNGTPRTPPTPAEPVEGIERAA.

Residues 340 to 363 (ASLNGTPRTPPTPAEPVEGIERAA) form a disordered region.

The protein belongs to the TtcA family. CTU1/NCS6/ATPBD3 subfamily.

It is found in the cytoplasm. It functions in the pathway tRNA modification; 5-methoxycarbonylmethyl-2-thiouridine-tRNA biosynthesis. In terms of biological role, plays a central role in 2-thiolation of mcm(5)S(2)U at tRNA wobble positions of tRNA(Lys), tRNA(Glu) and tRNA(Gln). Directly binds tRNAs and probably acts by catalyzing adenylation of tRNAs, an intermediate required for 2-thiolation. It is unclear whether it acts as a sulfurtransferase that transfers sulfur from thiocarboxylated URM1 onto the uridine of tRNAs at wobble position. Prior mcm(5) tRNA modification by the elongator complex is required for 2-thiolation. May also be involved in protein urmylation. This is Cytoplasmic tRNA 2-thiolation protein 1 from Cryptococcus neoformans var. neoformans serotype D (strain B-3501A) (Filobasidiella neoformans).